The chain runs to 255 residues: Ribonuclease HII (255 aa).

One can recognise an RNase H type-2 domain in the interval 72-255 (AIICGIDEVG…KSFEPIKSLL (184 aa)). Residues Asp-78, Glu-79, and Asp-170 each contribute to the a divalent metal cation site.

The protein belongs to the RNase HII family. Mn(2+) serves as cofactor. It depends on Mg(2+) as a cofactor.

The protein localises to the cytoplasm. It carries out the reaction Endonucleolytic cleavage to 5'-phosphomonoester.. Its function is as follows. Endonuclease that specifically degrades the RNA of RNA-DNA hybrids. In Staphylococcus aureus (strain bovine RF122 / ET3-1), this protein is Ribonuclease HII.